Consider the following 212-residue polypeptide: uncharacterized protein (212 aa).

Residues Gly-53, Glu-74, and Asp-97 each coordinate S-adenosyl-L-methionine.

This sequence belongs to the methyltransferase superfamily. YrrT family.

Its function is as follows. Could be a S-adenosyl-L-methionine-dependent methyltransferase. This is an uncharacterized protein from Bacillus cereus (strain ATCC 10987 / NRS 248).